The chain runs to 935 residues: Inter-alpha-trypsin inhibitor heavy chain H2 (935 aa).

The first 18 residues, 1-18 (MKGLTCFLLCFLLSEAQG), serve as a signal peptide directing secretion. The propeptide occupies 19–53 (FEIPTNGLSEFAEYGDLAELALGKFHVVPGNRRSQ). Positions 45 to 174 (VVPGNRRSQE…KVQFELHYQE (130 aa)) constitute a VIT domain. A glycan (N-linked (GlcNAc...) asparagine) is linked at Asn-107. Glu-271 is modified (4-carboxyglutamate). In terms of domain architecture, VWFA spans 297 to 457 (PKNILFVIDV…YDFLKRLSND (161 aa)). Asn-434 is a glycosylation site (N-linked (GlcNAc...) asparagine). Phosphoserine is present on Ser-455. Asp-691 carries the aspartate 1-(chondroitin 4-sulfate)-ester modification. A propeptide spanning residues 692 to 935 (PHFIIYLPRS…PLLYSFLKRP (244 aa)) is cleaved from the precursor. The residue at position 875 (Ser-875) is a Phosphoserine.

The protein belongs to the ITIH family. In terms of assembly, I-alpha-I plasma protease inhibitors are assembled from one or two heavy chains (HC) and one light chain, bikunin. Inter-alpha-inhibitor (I-alpha-I) is composed of ITIH1/HC1, ITIH2/HC2 and bikunin. Post-translationally, heavy chains are linked to bikunin via chondroitin 4-sulfate esterified to the alpha-carboxyl of the C-terminal aspartate after propeptide cleavage. In terms of processing, phosphorylated by FAM20C in the extracellular medium.

It localises to the secreted. In terms of biological role, may act as a carrier of hyaluronan in serum or as a binding protein between hyaluronan and other matrix protein, including those on cell surfaces in tissues to regulate the localization, synthesis and degradation of hyaluronan which are essential to cells undergoing biological processes. In Sus scrofa (Pig), this protein is Inter-alpha-trypsin inhibitor heavy chain H2 (ITIH2).